The chain runs to 599 residues: Subtilisin-like protease 1 (599 aa).

Residues 1–20 form the signal peptide; that stretch reads MRTVFIYACIISLVLRTIPA. Residues 21-195 constitute a propeptide, inhibition peptide; the sequence is HNDLMSKEKE…VESDELVGAD (175 aa). Residue N57 is glycosylated (N-linked (GlcNAc...) asparagine). Residues 74-101 adopt a coiled-coil conformation; sequence EDAPKEELNKIEMEKKKAEEEAKNSKKK. Residues N123, T126, P128, and G183 each coordinate Ca(2+). The N-linked (GlcNAc...) asparagine glycan is linked to N227. D251 serves as a coordination point for Ca(2+). Positions 257 to 574 constitute a Peptidase S8 domain; it reads QWGLDLARLD…GGYIDILNAV (318 aa). Disulfide bonds link C283–C393 and C372–C389. The active-site Charge relay system is D286. Positions 295, 306, 314, 315, 316, 318, 320, 322, and 323 each coordinate Ca(2+). N-linked (GlcNAc...) asparagine glycosylation is present at N331. The Charge relay system role is filled by H342. I353 provides a ligand contact to Ca(2+). N355 carries an N-linked (GlcNAc...) asparagine glycan. Ca(2+) contacts are provided by N356, I358, and V360. N402 and N434 each carry an N-linked (GlcNAc...) asparagine glycan. C435 and C448 are disulfide-bonded. Residue S519 is the Charge relay system of the active site.

It belongs to the peptidase S8 family. In terms of processing, the N-terminal prodomain is cleaved.

The protein resides in the secreted. It localises to the parasitophorous vacuole lumen. The protein localises to the cytoplasmic vesicle. Its subcellular location is the secretory vesicle. The catalysed reaction is Hydrolysis of proteins with broad specificity for peptide bonds, and a preference for a large uncharged residue in P1. Hydrolyzes peptide amides.. Functionally, mediates the proteolytic maturation of serine protease SERA3. Mediates the proteolytic maturation of MSP1, and thereby may prime the parasite cell surface for invasion of fresh erythrocytes. Required for completion of the parasite pre-erythrocytic stages. Required for hepatic schizont development and merozoite formation. Required for the egress of the hepatic merozoites from the parasitophorous vacuole. Required for parasite infectivity during blood stages. Required for male gamete egress. The polypeptide is Subtilisin-like protease 1 (Plasmodium berghei (strain Anka)).